We begin with the raw amino-acid sequence, 546 residues long: ATP synthase F(1) complex catalytic subunit beta, mitochondrial (546 aa).

A mitochondrion-targeting transit peptide spans 1-45 (MLGFVGRVAATSASGALRGLGPSPLPQVKVLLRASPAALQSARDY). N6-acetyllysine; alternate is present on residues lysine 123, lysine 132, and lysine 160. 3 positions are modified to N6-succinyllysine; alternate: lysine 123, lysine 132, and lysine 160. The residue at position 197 (lysine 197) is an N6-acetyllysine. Residues glycine 208, valine 209, glycine 210, lysine 211, threonine 212, and valine 213 each coordinate ADP. Position 208 (glycine 208) interacts with ATP. Phosphate is bound by residues glycine 208, valine 209, glycine 210, lysine 211, and threonine 212. Residues glycine 210, lysine 211, threonine 212, and valine 213 each coordinate ATP. Threonine 212 contributes to the Mg(2+) binding site. Glutamate 237 contributes to the Mg(2+) binding site. Arginine 238 contributes to the ATP binding site. N6-acetyllysine; alternate is present on residues lysine 258 and lysine 263. Residues lysine 258 and lysine 263 each carry the N6-succinyllysine; alternate modification. Position 311 is a phosphothreonine (threonine 311). N6-acetyllysine is present on lysine 425. A Phosphoserine modification is found at serine 432. 2 positions are modified to N6-acetyllysine: lysine 479 and lysine 484. An N6-acetyllysine; alternate modification is found at lysine 521. The residue at position 521 (lysine 521) is an N6-succinyllysine; alternate. The segment at 521 to 546 (KLAEEHSATQTSPSPKGAAAXXXRVV) is disordered.

Belongs to the ATPase alpha/beta chains family. Homotrimer. Component of the ATP synthase complex composed at least of ATP5F1A/subunit alpha, ATP5F1B/subunit beta, ATP5MC1/subunit c (homooctomer), MT-ATP6/subunit a, MT-ATP8/subunit 8, ATP5ME/subunit e, ATP5MF/subunit f, ATP5MG/subunit g, ATP5MK/subunit k, ATP5MJ/subunit j, ATP5F1C/subunit gamma, ATP5F1D/subunit delta, ATP5F1E/subunit epsilon, ATP5PF/subunit F6, ATP5PB/subunit b, ATP5PD/subunit d, ATP5PO/subunit OSCP. ATP synthase complex consists of a soluble F(1) head domain (subunits alpha(3) and beta(3)) - the catalytic core - and a membrane F(0) domain - the membrane proton channel (subunits c, a, 8, e, f, g, k and j). These two domains are linked by a central stalk (subunits gamma, delta, and epsilon) rotating inside the F1 region and a stationary peripheral stalk (subunits F6, b, d, and OSCP). Interacts with PPIF. Interacts with BCL2L1 isoform BCL-X(L); the interaction mediates the association of BCL2L1 isoform BCL-X(L) with the mitochondrial membrane F(1)F(0) ATP synthase and enhances neurons metabolic efficiency. Interacts with CLN5 and PPT1. Interacts with S100A1; this interaction increases F1-ATPase activity. Interacts with MTLN. Interacts with TTC5/STRAP; the interaction results in decreased mitochondrial ATP production.

It is found in the mitochondrion inner membrane. The catalysed reaction is ATP + H2O + 4 H(+)(in) = ADP + phosphate + 5 H(+)(out). Catalytic subunit beta, of the mitochondrial membrane ATP synthase complex (F(1)F(0) ATP synthase or Complex V) that produces ATP from ADP in the presence of a proton gradient across the membrane which is generated by electron transport complexes of the respiratory chain. ATP synthase complex consist of a soluble F(1) head domain - the catalytic core - and a membrane F(1) domain - the membrane proton channel. These two domains are linked by a central stalk rotating inside the F(1) region and a stationary peripheral stalk. During catalysis, ATP synthesis in the catalytic domain of F(1) is coupled via a rotary mechanism of the central stalk subunits to proton translocation. In vivo, can only synthesize ATP although its ATP hydrolase activity can be activated artificially in vitro. With the subunit alpha (ATP5F1A), forms the catalytic core in the F(1) domain. The polypeptide is ATP synthase F(1) complex catalytic subunit beta, mitochondrial (Canis lupus familiaris (Dog)).